Reading from the N-terminus, the 283-residue chain is Dihydropteroate synthase (283 aa).

The Pterin-binding domain occupies 18–274 (PKIMGIVNLT…DVKATADALK (257 aa)). Residue asparagine 25 coordinates Mg(2+). Residues threonine 66, aspartate 99, asparagine 119, aspartate 190, lysine 227, and 262–264 (RVH) each bind (7,8-dihydropterin-6-yl)methyl diphosphate.

It belongs to the DHPS family. In terms of assembly, homodimer. Mg(2+) serves as cofactor.

It carries out the reaction (7,8-dihydropterin-6-yl)methyl diphosphate + 4-aminobenzoate = 7,8-dihydropteroate + diphosphate. The protein operates within cofactor biosynthesis; tetrahydrofolate biosynthesis; 7,8-dihydrofolate from 2-amino-4-hydroxy-6-hydroxymethyl-7,8-dihydropteridine diphosphate and 4-aminobenzoate: step 1/2. In terms of biological role, catalyzes the condensation of para-aminobenzoate (pABA) with 6-hydroxymethyl-7,8-dihydropterin diphosphate (DHPt-PP) to form 7,8-dihydropteroate (H2Pte), the immediate precursor of folate derivatives. The chain is Dihydropteroate synthase (folP) from Neisseria meningitidis serogroup C.